Reading from the N-terminus, the 2176-residue chain is Protein eyes shut (2176 aa).

Over 1-122 (MSNVHQFDTQ…NPNILLPTLR (122 aa)) the chain is Cytoplasmic. A helical membrane pass occupies residues 123 to 143 (ILARGLLLPALILAILVGSSQ). In terms of domain architecture, EGF-like 1 spans 144-180 (AGFACLSNPCVFGVCIDGLNSSYSCYCIDGYTGIQCQ). At 144-2176 (AGFACLSNPC…DLHGDEPLTV (2033 aa)) the chain is on the extracellular side. 21 disulfides stabilise this stretch: C148-C158, C153-C168, C170-C179, C186-C197, C191-C206, C208-C217, C224-C235, C229-C244, C246-C255, C262-C276, C270-C286, C288-C297, C304-C315, C309-C324, C326-C335, C342-C353, C347-C362, C364-C373, C380-C392, C386-C401, and C403-C412. N-linked (GlcNAc...) asparagine glycosylation is present at N163. The region spanning 182-218 (NWDECWSSPCQNGGTCVDGVAYYNCTCPEGFSGSNCE) is the EGF-like 2; calcium-binding domain. N-linked (GlcNAc...) asparagine glycosylation is present at N205. Residues 220–256 (NVDECMSNPCQNGGLCRDRTNGYICTCQPGYLGSHCE) enclose the EGF-like 3; calcium-binding domain. Residues 258–298 (DVAVCETGTGARCQHGGECIEGPGLEFTCDCPAGWHGRICQ) form the EGF-like 4 domain. The EGF-like 5; calcium-binding domain occupies 300-336 (EINECASSPCQNGGVCVDKLAAYACACPMGYTGINCE). Residues 338-374 (EILICADNPCQNNALCLMEEGVPTCYCVPDYHGEKCE) form the EGF-like 6 domain. One can recognise an EGF-like 7; calcium-binding domain in the interval 376-413 (QYDECQLGPRCMNGGVCIDGVDTFSCSCPPLLTGMLCE). The N-linked (GlcNAc...) asparagine glycan is linked to N425. 2 stretches are compositionally biased toward low complexity: residues 429–447 (PATQSPPRRTTTTSTMAPP) and 482–502 (VTSVLSPSSSSSSSEEGVSVE). Disordered stretches follow at residues 429–465 (PATQSPPRRTTTTSTMAPPTVRPVTPPETTVSPSRAS), 482–639 (VTSV…RPTA), 757–783 (RFTTVQPPAGVTTTSPTEDSSVELPTP), 802–854 (LITT…VEIT), and 902–1014 (APPA…GVPE). A compositionally biased stretch (polar residues) spans 514 to 526 (GSHSISVEQTTAV). The segment covering 548-560 (SASESETETEEEI) has biased composition (acidic residues). 2 stretches are compositionally biased toward low complexity: residues 564–582 (TTARPPTSRSSSSSEESPS) and 596–632 (TSASSESSGEVVTSEEYTTVPHFEVSGSKSESGSEEV). Polar residues predominate over residues 757 to 775 (RFTTVQPPAGVTTTSPTED). Basic residues predominate over residues 811 to 820 (THHHHHHHPH). Pro residues-rich tracts occupy residues 904–922 (PATPAPVPPATTTPPPSPP) and 930–955 (TLPPTLPPVTLPPVTQPPPTIPPTPP). Residues 1018-1054 (GDVDCIKLGCYNGGTCVTTSEGSRCVCRFDRQGPLCE) form the EGF-like 8 domain. 3 disulfides stabilise this stretch: C1022–C1033, C1027–C1042, and C1044–C1053. In terms of domain architecture, Laminin G-like 1 spans 1059–1266 (IRNAAFSGDS…GITECGSLAC (208 aa)). 3 N-linked (GlcNAc...) asparagine glycosylation sites follow: N1165, N1170, and N1176. Residues 1309–1346 (EISVCEDNPCQYGGTCVQFPGSGYLCLCPLGKHGHYCE) enclose the EGF-like 9 domain. 3 disulfides stabilise this stretch: C1313-C1324, C1318-C1334, and C1336-C1345. In terms of domain architecture, Laminin G-like 2 spans 1353–1549 (LPSFSGSVNG…GVGQCGTREC (197 aa)). A glycan (N-linked (GlcNAc...) asparagine) is linked at N1471. EGF-like domains are found at residues 1545–1581 (GTRECHRHACQHDGACLQHGATFTCICQEGWYGPLCA) and 1583–1621 (PTNPCDSFNNKCYEDATCVPLVNGYECDCPVGRTGKNCE). 6 disulfides stabilise this stretch: C1549-C1560, C1554-C1569, C1571-C1580, C1587-C1600, C1594-C1609, and C1611-C1620. N-linked (GlcNAc...) asparagine glycosylation is found at N1665 and N1861. Residues 1692–1879 (EKQRSFSPVP…NIRDCDGTAC (188 aa)) enclose the Laminin G-like 3 domain. EGF-like domains are found at residues 1875 to 1912 (DGTACGGDSCESGGHCWLDEKLQPHCICPEYAKGDRCE) and 1913 to 1946 (YSETCKLIPCKNNGRCLRSGRCSCPNGWGGFYCE). 6 cysteine pairs are disulfide-bonded: C1879/C1890, C1884/C1900, C1902/C1911, C1917/C1928, C1922/C1934, and C1936/C1945. In terms of domain architecture, Laminin G-like 4 spans 1952–2166 (PTTPSFRGNS…TYQGENIGSC (215 aa)). 3 N-linked (GlcNAc...) asparagine glycosylation sites follow: N1994, N2035, and N2099. The segment at 2080–2101 (GGRSLGSTTPRSTLAGRRKNSS) is disordered.

This sequence belongs to the EYS family. Expressed from the beginning of rhabdomere biogenesis (48 hours after pupal formation), when it decorates the entire photoreceptor apical surface.

The protein resides in the membrane. It localises to the secreted. Its function is as follows. Essential for the formation of matrix-filled interrhabdomeral space: critical for the formation of epithelial lumina in the retina. Acts together with prominin (prom) and the cell adhesion molecule chaoptin (chp) to choreograph the partitioning of rhabdomeres into an open system. This is Protein eyes shut from Drosophila melanogaster (Fruit fly).